Here is a 108-residue protein sequence, read N- to C-terminus: Trp operon repressor homolog (108 aa).

The DNA-binding element occupies 59 to 82 (QRQISQLLGVGVATITRGSNELKS).

The protein belongs to the TrpR family. Homodimer.

The protein localises to the cytoplasm. Functionally, this protein is an aporepressor. When complexed with L-tryptophan it binds the operator region of the trp operon and prevents the initiation of transcription. The sequence is that of Trp operon repressor homolog from Aliivibrio fischeri (strain MJ11) (Vibrio fischeri).